The primary structure comprises 156 residues: ATP synthase subunit b (156 aa).

Residues 1 to 21 traverse the membrane as a helical segment; it reads MNVTVTLIGQMVAFGILVWFV.

It belongs to the ATPase B chain family. F-type ATPases have 2 components, F(1) - the catalytic core - and F(0) - the membrane proton channel. F(1) has five subunits: alpha(3), beta(3), gamma(1), delta(1), epsilon(1). F(0) has three main subunits: a(1), b(2) and c(10-14). The alpha and beta chains form an alternating ring which encloses part of the gamma chain. F(1) is attached to F(0) by a central stalk formed by the gamma and epsilon chains, while a peripheral stalk is formed by the delta and b chains.

The protein resides in the cell inner membrane. Its function is as follows. F(1)F(0) ATP synthase produces ATP from ADP in the presence of a proton or sodium gradient. F-type ATPases consist of two structural domains, F(1) containing the extramembraneous catalytic core and F(0) containing the membrane proton channel, linked together by a central stalk and a peripheral stalk. During catalysis, ATP synthesis in the catalytic domain of F(1) is coupled via a rotary mechanism of the central stalk subunits to proton translocation. In terms of biological role, component of the F(0) channel, it forms part of the peripheral stalk, linking F(1) to F(0). The sequence is that of ATP synthase subunit b from Nitrosococcus oceani (strain ATCC 19707 / BCRC 17464 / JCM 30415 / NCIMB 11848 / C-107).